Consider the following 417-residue polypeptide: UDP-N-acetylglucosamine 1-carboxyvinyltransferase (417 aa).

22–23 (KN) provides a ligand contact to phosphoenolpyruvate. UDP-N-acetyl-alpha-D-glucosamine is bound at residue Arg92. The active-site Proton donor is the Cys116. The residue at position 116 (Cys116) is a 2-(S-cysteinyl)pyruvic acid O-phosphothioketal. UDP-N-acetyl-alpha-D-glucosamine-binding positions include 121–125 (RPIDL), Asp306, and Ile328.

This sequence belongs to the EPSP synthase family. MurA subfamily.

The protein localises to the cytoplasm. It carries out the reaction phosphoenolpyruvate + UDP-N-acetyl-alpha-D-glucosamine = UDP-N-acetyl-3-O-(1-carboxyvinyl)-alpha-D-glucosamine + phosphate. Its pathway is cell wall biogenesis; peptidoglycan biosynthesis. Cell wall formation. Adds enolpyruvyl to UDP-N-acetylglucosamine. The chain is UDP-N-acetylglucosamine 1-carboxyvinyltransferase from Buchnera aphidicola subsp. Schizaphis graminum (strain Sg).